The chain runs to 172 residues: Translationally-controlled tumor protein (172 aa).

Positions 1–172 constitute a TCTP domain; that stretch reads MIIYRDLISH…FKDGLEMEKC (172 aa). Ser-46 carries the phosphoserine; by PLK1 modification. Ser-53 bears the Phosphoserine mark. The residue at position 64 (Ser-64) is a Phosphoserine; by PLK1. The required for reduction of TSC22D1 protein stability stretch occupies residues 70–172; that stretch reads VDIVMNHHLQ…FKDGLEMEKC (103 aa).

Belongs to the TCTP family. In terms of assembly, homodimer. Interacts with STEAP3. Interacts with TSC22D1; interaction results in the destabilization of TSC22D1 protein.

The protein resides in the cytoplasm. In terms of biological role, involved in calcium binding and microtubule stabilization. Acts as a negative regulator of TSC22D1-mediated apoptosis, via interaction with and destabilization of TSC22D1 protein. The protein is Translationally-controlled tumor protein (TPT1) of Bos taurus (Bovine).